The sequence spans 120 residues: Large ribosomal subunit protein uL18 (120 aa).

Belongs to the universal ribosomal protein uL18 family. In terms of assembly, part of the 50S ribosomal subunit; part of the 5S rRNA/L5/L18/L25 subcomplex. Contacts the 5S and 23S rRNAs.

In terms of biological role, this is one of the proteins that bind and probably mediate the attachment of the 5S RNA into the large ribosomal subunit, where it forms part of the central protuberance. This chain is Large ribosomal subunit protein uL18, found in Rhodospirillum rubrum (strain ATCC 11170 / ATH 1.1.1 / DSM 467 / LMG 4362 / NCIMB 8255 / S1).